Here is a 278-residue protein sequence, read N- to C-terminus: 4-diphosphocytidyl-2-C-methyl-D-erythritol kinase (278 aa).

The active site involves Lys-9. 93–103 (PLGGGLGGGSS) provides a ligand contact to ATP. The active site involves Asp-135.

Belongs to the GHMP kinase family. IspE subfamily.

The enzyme catalyses 4-CDP-2-C-methyl-D-erythritol + ATP = 4-CDP-2-C-methyl-D-erythritol 2-phosphate + ADP + H(+). It participates in isoprenoid biosynthesis; isopentenyl diphosphate biosynthesis via DXP pathway; isopentenyl diphosphate from 1-deoxy-D-xylulose 5-phosphate: step 3/6. In terms of biological role, catalyzes the phosphorylation of the position 2 hydroxy group of 4-diphosphocytidyl-2C-methyl-D-erythritol. The sequence is that of 4-diphosphocytidyl-2-C-methyl-D-erythritol kinase from Nitrosomonas eutropha (strain DSM 101675 / C91 / Nm57).